We begin with the raw amino-acid sequence, 150 residues long: 6,7-dimethyl-8-ribityllumazine synthase (150 aa).

5-amino-6-(D-ribitylamino)uracil contacts are provided by residues F11, 43–45 (TYE), and 67–69 (AVI). A (2S)-2-hydroxy-3-oxobutyl phosphate-binding site is contributed by 72-73 (AT). H75 acts as the Proton donor in catalysis. L100 lines the 5-amino-6-(D-ribitylamino)uracil pocket. R115 is a (2S)-2-hydroxy-3-oxobutyl phosphate binding site.

It belongs to the DMRL synthase family.

The enzyme catalyses (2S)-2-hydroxy-3-oxobutyl phosphate + 5-amino-6-(D-ribitylamino)uracil = 6,7-dimethyl-8-(1-D-ribityl)lumazine + phosphate + 2 H2O + H(+). Its pathway is cofactor biosynthesis; riboflavin biosynthesis; riboflavin from 2-hydroxy-3-oxobutyl phosphate and 5-amino-6-(D-ribitylamino)uracil: step 1/2. Catalyzes the formation of 6,7-dimethyl-8-ribityllumazine by condensation of 5-amino-6-(D-ribitylamino)uracil with 3,4-dihydroxy-2-butanone 4-phosphate. This is the penultimate step in the biosynthesis of riboflavin. In Staphylothermus marinus (strain ATCC 43588 / DSM 3639 / JCM 9404 / F1), this protein is 6,7-dimethyl-8-ribityllumazine synthase.